A 278-amino-acid chain; its full sequence is Malonyl-[acyl-carrier protein] O-methyltransferase (278 aa).

It belongs to the methyltransferase superfamily.

It catalyses the reaction malonyl-[ACP] + S-adenosyl-L-methionine = malonyl-[ACP] methyl ester + S-adenosyl-L-homocysteine. The protein operates within cofactor biosynthesis; biotin biosynthesis. Functionally, converts the free carboxyl group of a malonyl-thioester to its methyl ester by transfer of a methyl group from S-adenosyl-L-methionine (SAM). It allows to synthesize pimeloyl-ACP via the fatty acid synthetic pathway. The sequence is that of Malonyl-[acyl-carrier protein] O-methyltransferase from Brevibacillus brevis (strain 47 / JCM 6285 / NBRC 100599).